The sequence spans 237 residues: Orotidine 5'-phosphate decarboxylase (237 aa).

Residues Asp-17, Lys-39, 66–75 (DLKLHDIGNT), Thr-121, Arg-182, Gln-191, Gly-211, and Arg-212 each bind substrate. Lys-68 functions as the Proton donor in the catalytic mechanism.

This sequence belongs to the OMP decarboxylase family. Type 1 subfamily. In terms of assembly, homodimer.

It catalyses the reaction orotidine 5'-phosphate + H(+) = UMP + CO2. It participates in pyrimidine metabolism; UMP biosynthesis via de novo pathway; UMP from orotate: step 2/2. In terms of biological role, catalyzes the decarboxylation of orotidine 5'-monophosphate (OMP) to uridine 5'-monophosphate (UMP). In Rhodopseudomonas palustris (strain TIE-1), this protein is Orotidine 5'-phosphate decarboxylase.